A 429-amino-acid polypeptide reads, in one-letter code: Glutamate-1-semialdehyde 2,1-aminomutase 1 (429 aa).

An N6-(pyridoxal phosphate)lysine modification is found at lysine 268.

Belongs to the class-III pyridoxal-phosphate-dependent aminotransferase family. HemL subfamily. As to quaternary structure, homodimer. The cofactor is pyridoxal 5'-phosphate.

The protein localises to the cytoplasm. It catalyses the reaction (S)-4-amino-5-oxopentanoate = 5-aminolevulinate. It participates in porphyrin-containing compound metabolism; protoporphyrin-IX biosynthesis; 5-aminolevulinate from L-glutamyl-tRNA(Glu): step 2/2. The sequence is that of Glutamate-1-semialdehyde 2,1-aminomutase 1 from Lysinibacillus sphaericus (strain C3-41).